We begin with the raw amino-acid sequence, 147 residues long: 3-dehydroquinate dehydratase (147 aa).

The active-site Proton acceptor is tyrosine 23. Substrate-binding residues include asparagine 74, histidine 80, and aspartate 87. Residue histidine 100 is the Proton donor of the active site. Substrate is bound by residues 101–102 (IS) and arginine 111.

It belongs to the type-II 3-dehydroquinase family. In terms of assembly, homododecamer.

The enzyme catalyses 3-dehydroquinate = 3-dehydroshikimate + H2O. The protein operates within metabolic intermediate biosynthesis; chorismate biosynthesis; chorismate from D-erythrose 4-phosphate and phosphoenolpyruvate: step 3/7. Its function is as follows. Catalyzes a trans-dehydration via an enolate intermediate. The chain is 3-dehydroquinate dehydratase from Prochlorococcus marinus (strain MIT 9301).